The chain runs to 562 residues: Tissue-type plasminogen activator (562 aa).

Residues 1–22 form the signal peptide; that stretch reads MDAMKRGLCCVLLLCGAVFVSP. Residues 23–32 constitute a propeptide that is removed on maturation; the sequence is SQEIHARFRR. A propeptide spans 33–35 (removed by plasmin); it reads GAR. In terms of domain architecture, Fibronectin type-I spans 39–81; that stretch reads VICRDEKTQMIYQQHQSWLRPVLRSNRVEYCWCNSGRAQCHSV. 17 disulfide bridges follow: Cys41–Cys71, Cys69–Cys78, Cys86–Cys97, Cys91–Cys108, Cys110–Cys119, Cys127–Cys208, Cys148–Cys190, Cys179–Cys203, Cys215–Cys296, Cys236–Cys278, Cys267–Cys291, Cys299–Cys430, Cys342–Cys358, Cys350–Cys419, Cys444–Cys519, Cys476–Cys492, and Cys509–Cys537. The important for binding to annexin A2 stretch occupies residues 42–52; the sequence is RDEKTQMIYQQ. In terms of domain architecture, EGF-like spans 82–120; that stretch reads PVKSCSEPRCFNGGTCQQALYFSDFVCQCPEGFAGKCCE. O-linked (Fuc) threonine glycosylation is present at Thr96. 2 Kringle domains span residues 127 to 208 and 215 to 296; these read CYED…TPAC and CYFG…VPSC. Asn152 carries N-linked (GlcNAc...) asparagine glycosylation. N-linked (GlcNAc...) asparagine; partial glycosylation is present at Asn219. One can recognise a Peptidase S1 domain in the interval 311-561; sequence IKGGLFADIA…YLDWIRDNMR (251 aa). Active-site charge relay system residues include His357 and Asp406. Asn483 carries an N-linked (GlcNAc...) asparagine glycan. Ser513 acts as the Charge relay system in catalysis.

The protein belongs to the peptidase S1 family. As to quaternary structure, heterodimer of chain A and chain B held by a disulfide bond. Forms a heterodimer with SERPINA5. Binds to fibrin with high affinity. This interaction leads to an increase in the catalytic efficiency of the enzyme between 100-fold and 1000-fold, due to an increase in affinity for plasminogen. Similarly, binding to heparin increases the activation of plasminogen. Binds to annexin A2, cytokeratin-8, fibronectin and laminin. Binds to mannose receptor and the low-density lipoprotein receptor-related protein (LRP1); these proteins are involved in TPA clearance. Yet unidentified interactions on endothelial cells and vascular smooth muscle cells (VSMC) lead to a 100-fold stimulation of plasminogen activation. In addition, binding to VSMC reduces TPA inhibition by PAI-1 by 30-fold. Binds LRP1B; binding is followed by internalization and degradation. Interacts with SERPINE1. In complex with SERPINE1, interacts with SORL1. Interacts with apyrase from Anopheles gambiae saliva; the interaction results in PLAT activation probably via an allosteric activation mechanism. Post-translationally, the single chain, almost fully active enzyme, can be further processed into a two-chain fully active form by a cleavage after Arg-310 catalyzed by plasmin, tissue kallikrein or factor Xa. In terms of processing, differential cell-specific N-linked glycosylation gives rise to two glycoforms, type I (glycosylated at Asn-219) and type II (not glycosylated at Asn-219). The single chain type I glycoform is less readily converted into the two-chain form by plasmin, and the two-chain type I glycoform has a lower activity than the two-chain type II glycoform in the presence of fibrin. N-glycosylation of Asn-152; the bound oligomannosidic glycan is involved in the interaction with the mannose receptor. Post-translationally, characterization of O-linked glycan was studied in Bowes melanoma cell line. Synthesized in numerous tissues (including tumors) and secreted into most extracellular body fluids, such as plasma, uterine fluid, saliva, gingival crevicular fluid, tears, seminal fluid, and milk.

It is found in the secreted. The protein localises to the extracellular space. It catalyses the reaction Specific cleavage of Arg-|-Val bond in plasminogen to form plasmin.. Its activity is regulated as follows. Inhibited by SERPINA5. Inhibited by SERPINE1. In terms of biological role, converts the abundant, but inactive, zymogen plasminogen to plasmin by hydrolyzing a single Arg-Val bond in plasminogen. By controlling plasmin-mediated proteolysis, it plays an important role in tissue remodeling and degradation, in cell migration and many other physiopathological events. During oocyte activation, plays a role in cortical granule reaction in the zona reaction, which contributes to the block to polyspermy. The sequence is that of Tissue-type plasminogen activator from Homo sapiens (Human).